The chain runs to 152 residues: UPF0178 protein SAR0734 (152 aa).

This sequence belongs to the UPF0178 family.

The chain is UPF0178 protein SAR0734 from Staphylococcus aureus (strain MRSA252).